The following is a 292-amino-acid chain: Protein/nucleic acid deglycase HchA (292 aa).

Positions 1–12 are enriched in polar residues; that stretch reads MSQDVNELSKQP. The tract at residues 1 to 23 is disordered; sequence MSQDVNELSKQPTPDKAEDNAFF. Cys-190 (nucleophile) is an active-site residue.

Belongs to the peptidase C56 family. HchA subfamily.

The protein resides in the cytoplasm. It carries out the reaction N(omega)-(1-hydroxy-2-oxopropyl)-L-arginyl-[protein] + H2O = lactate + L-arginyl-[protein] + H(+). The enzyme catalyses N(6)-(1-hydroxy-2-oxopropyl)-L-lysyl-[protein] + H2O = lactate + L-lysyl-[protein] + H(+). It catalyses the reaction S-(1-hydroxy-2-oxopropyl)-L-cysteinyl-[protein] + H2O = lactate + L-cysteinyl-[protein] + H(+). The catalysed reaction is N(omega)-(1-hydroxy-2-oxoethyl)-L-arginyl-[protein] + H2O = L-arginyl-[protein] + glycolate + H(+). It carries out the reaction N(6)-(1-hydroxy-2-oxoethyl)-L-lysyl-[protein] + H2O = glycolate + L-lysyl-[protein] + H(+). The enzyme catalyses S-(1-hydroxy-2-oxoethyl)-L-cysteinyl-[protein] + H2O = glycolate + L-cysteinyl-[protein] + H(+). It catalyses the reaction N(2)-(1-hydroxy-2-oxopropyl)-dGTP + H2O = lactate + dGTP + H(+). The catalysed reaction is N(2)-(1-hydroxy-2-oxopropyl)-GTP + H2O = lactate + GTP + H(+). It carries out the reaction N(2)-(1-hydroxy-2-oxopropyl)-GDP + H2O = lactate + GDP + H(+). The enzyme catalyses N(2)-(1-hydroxy-2-oxopropyl)-GMP + H2O = lactate + GMP + H(+). It catalyses the reaction N(2)-(1-hydroxy-2-oxoethyl)-dGTP + H2O = dGTP + glycolate + H(+). The catalysed reaction is N(2)-(1-hydroxy-2-oxoethyl)-GTP + H2O = glycolate + GTP + H(+). It carries out the reaction N(2)-(1-hydroxy-2-oxoethyl)-GDP + H2O = glycolate + GDP + H(+). The enzyme catalyses N(2)-(1-hydroxy-2-oxoethyl)-GMP + H2O = glycolate + GMP + H(+). It catalyses the reaction an N(2)-(1-hydroxy-2-oxopropyl)-guanosine in RNA + H2O = a guanosine in RNA + lactate + H(+). The catalysed reaction is an N(2)-(1-hydroxy-2-oxopropyl)-2'-deoxyguanosine in DNA + H2O = a 2'-deoxyguanosine in DNA + lactate + H(+). It carries out the reaction an N(2)-(1-hydroxy-2-oxoethyl)-guanosine in RNA + H2O = a guanosine in RNA + glycolate + H(+). The enzyme catalyses an N(2)-(1-hydroxy-2-oxoethyl)-2'-deoxyguanosine in DNA + H2O = a 2'-deoxyguanosine in DNA + glycolate + H(+). Functionally, protein and nucleotide deglycase that catalyzes the deglycation of the Maillard adducts formed between amino groups of proteins or nucleotides and reactive carbonyl groups of glyoxals. Thus, functions as a protein deglycase that repairs methylglyoxal- and glyoxal-glycated proteins, and releases repaired proteins and lactate or glycolate, respectively. Deglycates cysteine, arginine and lysine residues in proteins, and thus reactivates these proteins by reversing glycation by glyoxals. Acts on early glycation intermediates (hemithioacetals and aminocarbinols), preventing the formation of Schiff bases and advanced glycation endproducts (AGE). Also functions as a nucleotide deglycase able to repair glycated guanine in the free nucleotide pool (GTP, GDP, GMP, dGTP) and in DNA and RNA. Is thus involved in a major nucleotide repair system named guanine glycation repair (GG repair), dedicated to reversing methylglyoxal and glyoxal damage via nucleotide sanitization and direct nucleic acid repair. Plays an important role in protecting cells from carbonyl stress. This Staphylococcus aureus (strain MSSA476) protein is Protein/nucleic acid deglycase HchA.